The chain runs to 398 residues: Membrane-spanning 4-domains subfamily A member 18 (398 aa).

4 helical membrane-spanning segments follow: residues leucine 156 to leucine 176, tyrosine 178 to valine 198, serine 218 to threonine 238, and alanine 251 to serine 271. Residues threonine 316–proline 346 form a disordered region. Residues valine 319 to histidine 331 are compositionally biased toward polar residues. A compositionally biased stretch (low complexity) spans proline 332–proline 346.

The protein belongs to the MS4A family.

It localises to the membrane. The polypeptide is Membrane-spanning 4-domains subfamily A member 18 (MS4A18) (Homo sapiens (Human)).